A 598-amino-acid chain; its full sequence is NADH-ubiquinone oxidoreductase chain 5 (598 aa).

16 consecutive transmembrane segments (helical) span residues 1–21 (MLELWGVLSLTSLGVMVIFLF), 28–48 (FAESVKYAGYMNAVLLSILLM), 81–101 (CFFVVGLYVTWNILMFSFYYM), 115–135 (GLFLIAMLLLVSAESLFQLLI), 171–191 (GDIGLLIMLMWSLVTLGDWSF), 193–213 (GLYALDFVNTFFLLGVVLAAA), 233–253 (TPVSSLLHSSTMVVAGVFLLI), 265–285 (IQLMVFFLGTMTTLFSAICAL), 293–312 (VVAFSTASQLGLMVTAVGAG), 323–343 (MHAFFKAMLFMCSGSFIHGLQ), 362–382 (SVCFFIGSAALMGVPFLAGFF), 399–421 (WAVGLVLIATSFTAAYSVRLLYF), 454–474 (VIAGVVFIYFLSPNQISCLSL), 480–500 (LAAVFVTLVGGLIAWDVVNLL), 509–529 (IPELAFEAQVGFYPLIMHKLI), and 576–596 (LIKMYIAVMVMMGGLILGIMI).

This sequence belongs to the complex I subunit 5 family.

It is found in the mitochondrion inner membrane. It carries out the reaction a ubiquinone + NADH + 5 H(+)(in) = a ubiquinol + NAD(+) + 4 H(+)(out). In terms of biological role, core subunit of the mitochondrial membrane respiratory chain NADH dehydrogenase (Complex I) that is believed to belong to the minimal assembly required for catalysis. Complex I functions in the transfer of electrons from NADH to the respiratory chain. The immediate electron acceptor for the enzyme is believed to be ubiquinone. This chain is NADH-ubiquinone oxidoreductase chain 5 (ND5), found in Branchiostoma lanceolatum (Common lancelet).